The sequence spans 445 residues: UPF0210 protein SZO_15840 (445 aa).

It belongs to the UPF0210 family. Homodimer.

This is UPF0210 protein SZO_15840 from Streptococcus equi subsp. zooepidemicus (strain H70).